Here is a 458-residue protein sequence, read N- to C-terminus: Purple acid phosphatase 23 (458 aa).

An N-terminal signal peptide occupies residues methionine 1–alanine 19. N-linked (GlcNAc...) asparagine glycosylation is found at asparagine 59, asparagine 121, and asparagine 136. Aspartate 194 serves as a coordination point for Fe cation. N-linked (GlcNAc...) asparagine glycosylation occurs at asparagine 200. Residues aspartate 221 and tyrosine 224 each coordinate Fe cation. Aspartate 221 provides a ligand contact to Mn(2+). Mn(2+) is bound at residue asparagine 278. Asparagine 278 contacts substrate. Residue asparagine 331 is glycosylated (N-linked (GlcNAc...) asparagine). Histidine 360 is a binding site for Mn(2+). Catalysis depends on histidine 370, which acts as the Proton donor. Histidine 397 is a Mn(2+) binding site. Position 397 to 399 (histidine 397 to histidine 399) interacts with substrate. Residue histidine 399 coordinates Fe cation. 2 N-linked (GlcNAc...) asparagine glycosylation sites follow: asparagine 409 and asparagine 455.

The protein belongs to the metallophosphoesterase superfamily. Purple acid phosphatase family. Homodimer. Requires Fe cation as cofactor. Mn(2+) is required as a cofactor. In terms of tissue distribution, specifically expressed in flowers.

It is found in the secreted. It catalyses the reaction a phosphate monoester + H2O = an alcohol + phosphate. Its function is as follows. Acid phosphatase activity with ATP, ADP, dATP, pyrophosphate, polyphosphate, phosphoserine and phosphothreonine. Low or no activity with phosphotyrosine, AMP and phytate. The chain is Purple acid phosphatase 23 (PAP23) from Arabidopsis thaliana (Mouse-ear cress).